A 432-amino-acid polypeptide reads, in one-letter code: D-amino acid dehydrogenase 1 (432 aa).

3-17 (VLILGSGVVGTVSAY) serves as a coordination point for FAD.

It belongs to the DadA oxidoreductase family. The cofactor is FAD.

The catalysed reaction is a D-alpha-amino acid + A + H2O = a 2-oxocarboxylate + AH2 + NH4(+). Its function is as follows. Oxidative deamination of D-amino acids. The chain is D-amino acid dehydrogenase 1 (dadA1) from Pseudomonas putida (strain ATCC 47054 / DSM 6125 / CFBP 8728 / NCIMB 11950 / KT2440).